Consider the following 464-residue polypeptide: MNAAVLLLLLALAALPASCAPPRSFRLELASVDASAADAANLTEHELLRRAIQRSRYRLAGIGMARGEAASARKAVVAETPIMPAGGEYLVKLGIGTPPYKFTAAIDTASDLIWTQCQPCTGCYHQVDPMFNPRVSSTYAALPCSSDTCDELDVHRCGHDDDESCQYTYTYSGNATTEGTLAVDKLVIGEDAFRGVAFGCSTSSTGGAPPPQASGVVGLGRGPLSLVSQLSVRRFAYCLPPPASRIPGKLVLGADADAARNATNRIAVPMRRDPRYPSYYYLNLDGLLIGDRAMSLPPTTTTTATATATAPAPAPTPSPNATAVAVGDANRYGMIIDIASTITFLEASLYDELVNDLEVEIRLPRGTGSSLGLDLCFILPDGVAFDRVYVPAVALAFDGRWLRLDKARLFAEDRESGMMCLMVGRAEAGSVSILGNFQQQNMQVLYNLRRGRVTFVQSPCGALR.

A signal peptide spans methionine 1–cysteine 19. N-linked (GlcNAc...) asparagine glycosylation occurs at asparagine 41. The Peptidase A1 domain occupies tyrosine 89 to valine 456. Residue aspartate 107 is part of the active site. Cysteine 117 and cysteine 123 form a disulfide bridge. N-linked (GlcNAc...) asparagine glycosylation is found at asparagine 174 and asparagine 261. Residues threonine 299–proline 311 are compositionally biased toward low complexity. The interval threonine 299 to proline 319 is disordered. N-linked (GlcNAc...) asparagine glycosylation occurs at asparagine 320. Residue aspartate 337 is part of the active site. Cysteines 376 and 420 form a disulfide.

Belongs to the peptidase A1 family.

In terms of biological role, anther-specific aspartic protease involved in tapetal programmed cell death (PCD). Directly regulated by the transcription factor EAT1/DTD in anthers during tapetum PCD and degeneration. The chain is Aspartyl protease 37 from Oryza sativa subsp. japonica (Rice).